Consider the following 358-residue polypeptide: C-X-C chemokine receptor type 4-B (358 aa).

The interval 1-25 (MDGFSGGIDINIFDGNSTENGSGDF) is important for chemokine binding and signaling. Topologically, residues 1 to 44 (MDGFSGGIDINIFDGNSTENGSGDFEDFIEPCFMQENSDFNRIF) are extracellular. 2 N-linked (GlcNAc...) asparagine glycosylation sites follow: N16 and N20. Disulfide bonds link C32–C281 and C113–C190. The helical transmembrane segment at 45-67 (LPTIYSFIFLLGIIGNGLVVVVM) threads the bilayer. At 68 to 81 (GYQKKSRTMTDKYR) the chain is on the cytoplasmic side. The chain crosses the membrane as a helical span at residues 82-103 (LHLSVADLLFVFTLPFWSVDAA). Residues 98–101 (WSVD) are chemokine binding. At 104 to 114 (IGWYFKEFLCK) the chain is on the extracellular side. A helical transmembrane segment spans residues 115–134 (AVHVIYTVNLYSSVLILAFI). A chemokine binding region spans residues 117–121 (HVIYT). At 135–158 (SLDRYLAIVHATNSQGSRKMLADK) the chain is on the cytoplasmic side. Positions 139–151 (YLAIVHATNSQGS) are involved in dimerization; when bound to chemokine. A helical transmembrane segment spans residues 159–178 (VVYAGVWLPALLLTVPDLVF). Topologically, residues 179–202 (ASVSNENGQFVCDRIYPIDNRETW) are extracellular. Residues 190–194 (CDRIY) are chemokine binding, important for signaling. Residues 203-223 (TVGFRFLHITVGLILPGLIIL) traverse the membrane as a helical segment. The Cytoplasmic segment spans residues 224–248 (VCYCVIISKLSHSKGHQKRKALKTT). Residues 249 to 268 (VILILAFFACWLPYYVCLTT) traverse the membrane as a helical segment. Residues 269 to 289 (DTFMMLGLVKADCIWENTLHK) are Extracellular-facing. A helical transmembrane segment spans residues 290–309 (AISITEALAFFHCCLNPILY). Residues 310-358 (AFLGAKFKKSAQNAFTSVSRGSSLKILSKKRAGLSSVSTESESSSFHSS) are Cytoplasmic-facing. The segment at 338-358 (KKRAGLSSVSTESESSSFHSS) is disordered. Over residues 344–358 (SSVSTESESSSFHSS) the composition is skewed to low complexity.

This sequence belongs to the G-protein coupled receptor 1 family. In terms of assembly, monomer. Can form dimers. In terms of processing, sulfation is required for efficient binding of cxcl12/sdf-1alpha and promotes its dimerization. O- and N-glycosylated.

It is found in the cell membrane. The protein localises to the cytoplasm. The protein resides in the nucleus. Its subcellular location is the early endosome. It localises to the late endosome. It is found in the lysosome. Its function is as follows. Receptor for the C-X-C chemokine cxcl12/sdf-1. Transduces a signal by increasing the intracellular level of calcium ions. Signaling with cxcl12/sdf-1 mediates the directional movement of mesodermal cells during gastrulation. May play a role in the migration of embryonic presumptive primordial germ cells (pPGCs). May also be involved in regulating migration of hematopoietic stem cells into the larval liver. The sequence is that of C-X-C chemokine receptor type 4-B (cxcr4-b) from Xenopus laevis (African clawed frog).